A 483-amino-acid polypeptide reads, in one-letter code: Probable glycine dehydrogenase (decarboxylating) subunit 2 (483 aa).

K267 is subject to N6-(pyridoxal phosphate)lysine.

This sequence belongs to the GcvP family. C-terminal subunit subfamily. As to quaternary structure, the glycine cleavage system is composed of four proteins: P, T, L and H. In this organism, the P 'protein' is a heterodimer of two subunits. The cofactor is pyridoxal 5'-phosphate.

It carries out the reaction N(6)-[(R)-lipoyl]-L-lysyl-[glycine-cleavage complex H protein] + glycine + H(+) = N(6)-[(R)-S(8)-aminomethyldihydrolipoyl]-L-lysyl-[glycine-cleavage complex H protein] + CO2. Its function is as follows. The glycine cleavage system catalyzes the degradation of glycine. The P protein binds the alpha-amino group of glycine through its pyridoxal phosphate cofactor; CO(2) is released and the remaining methylamine moiety is then transferred to the lipoamide cofactor of the H protein. The protein is Probable glycine dehydrogenase (decarboxylating) subunit 2 of Kosmotoga olearia (strain ATCC BAA-1733 / DSM 21960 / TBF 19.5.1).